A 377-amino-acid polypeptide reads, in one-letter code: Succinyl-diaminopimelate desuccinylase (377 aa).

Position 68 (H68) interacts with Zn(2+). D70 is a catalytic residue. D101 lines the Zn(2+) pocket. E135 acts as the Proton acceptor in catalysis. Zn(2+)-binding residues include E136, E164, and H350.

Belongs to the peptidase M20A family. DapE subfamily. Homodimer. Zn(2+) is required as a cofactor. It depends on Co(2+) as a cofactor.

It catalyses the reaction N-succinyl-(2S,6S)-2,6-diaminopimelate + H2O = (2S,6S)-2,6-diaminopimelate + succinate. It functions in the pathway amino-acid biosynthesis; L-lysine biosynthesis via DAP pathway; LL-2,6-diaminopimelate from (S)-tetrahydrodipicolinate (succinylase route): step 3/3. Catalyzes the hydrolysis of N-succinyl-L,L-diaminopimelic acid (SDAP), forming succinate and LL-2,6-diaminopimelate (DAP), an intermediate involved in the bacterial biosynthesis of lysine and meso-diaminopimelic acid, an essential component of bacterial cell walls. The protein is Succinyl-diaminopimelate desuccinylase of Acinetobacter baumannii (strain AB0057).